The following is a 331-amino-acid chain: MTTETNPAVTPAYNPSEKQKGAAKTIRIPIKVIPMERLPKPDWIRVKAASPSTRFYEIKDILRANNLVTVCEEASCPNIGECFGKGTATFMIMGDKCTRRCPFCDVGHGRPDPLDVNEPENLAKTIAALRLNYVVITSVDRDDLRDGGAGHFAECIRRVRELSPNTRIEILVPDFRGRMDRALEILNAAPPDVMNHNLETAPRLYKEARPGSDYEYSLNLLKRFKAQHPNTPTKSGIMVGLGETDEEVLQVMRDMRAHDVDMLTIGQYLMPSGDHLPVRRYVHPDTFKMYEEEAYKMGFAHAAVGAMVRSSYHADQQAHGVTSAQSDVVNK.

Residues 1–20 (MTTETNPAVTPAYNPSEKQK) are disordered. [4Fe-4S] cluster-binding residues include cysteine 71, cysteine 76, cysteine 82, cysteine 97, cysteine 101, cysteine 104, and serine 311. Residues 82–300 (CFGKGTATFM…EEEAYKMGFA (219 aa)) form the Radical SAM core domain.

This sequence belongs to the radical SAM superfamily. Lipoyl synthase family. The cofactor is [4Fe-4S] cluster.

It localises to the cytoplasm. It carries out the reaction [[Fe-S] cluster scaffold protein carrying a second [4Fe-4S](2+) cluster] + N(6)-octanoyl-L-lysyl-[protein] + 2 oxidized [2Fe-2S]-[ferredoxin] + 2 S-adenosyl-L-methionine + 4 H(+) = [[Fe-S] cluster scaffold protein] + N(6)-[(R)-dihydrolipoyl]-L-lysyl-[protein] + 4 Fe(3+) + 2 hydrogen sulfide + 2 5'-deoxyadenosine + 2 L-methionine + 2 reduced [2Fe-2S]-[ferredoxin]. The protein operates within protein modification; protein lipoylation via endogenous pathway; protein N(6)-(lipoyl)lysine from octanoyl-[acyl-carrier-protein]: step 2/2. Functionally, catalyzes the radical-mediated insertion of two sulfur atoms into the C-6 and C-8 positions of the octanoyl moiety bound to the lipoyl domains of lipoate-dependent enzymes, thereby converting the octanoylated domains into lipoylated derivatives. This is Lipoyl synthase from Janthinobacterium sp. (strain Marseille) (Minibacterium massiliensis).